The chain runs to 379 residues: 3-dehydroquinate synthase (379 aa).

NAD(+)-binding positions include 67–72 (PGEKNK), 101–105 (GIILD), 125–126 (TT), Lys-138, and Lys-147. Residues Glu-180, His-242, and His-258 each coordinate Zn(2+).

The protein belongs to the sugar phosphate cyclases superfamily. Dehydroquinate synthase family. The cofactor is NAD(+). Co(2+) serves as cofactor. Requires Zn(2+) as cofactor.

It localises to the cytoplasm. The catalysed reaction is 7-phospho-2-dehydro-3-deoxy-D-arabino-heptonate = 3-dehydroquinate + phosphate. It participates in metabolic intermediate biosynthesis; chorismate biosynthesis; chorismate from D-erythrose 4-phosphate and phosphoenolpyruvate: step 2/7. Functionally, catalyzes the conversion of 3-deoxy-D-arabino-heptulosonate 7-phosphate (DAHP) to dehydroquinate (DHQ). This Chlamydia caviae (strain ATCC VR-813 / DSM 19441 / 03DC25 / GPIC) (Chlamydophila caviae) protein is 3-dehydroquinate synthase.